The sequence spans 341 residues: Heat-inducible transcription repressor HrcA (341 aa).

It belongs to the HrcA family.

Its function is as follows. Negative regulator of class I heat shock genes (grpE-dnaK-dnaJ and groELS operons). Prevents heat-shock induction of these operons. This is Heat-inducible transcription repressor HrcA from Mycobacteroides abscessus (strain ATCC 19977 / DSM 44196 / CCUG 20993 / CIP 104536 / JCM 13569 / NCTC 13031 / TMC 1543 / L948) (Mycobacterium abscessus).